A 513-amino-acid polypeptide reads, in one-letter code: ATP synthase subunit alpha (513 aa).

Residue 169-176 participates in ATP binding; sequence GDRQVGKT.

The protein belongs to the ATPase alpha/beta chains family. In terms of assembly, F-type ATPases have 2 components, CF(1) - the catalytic core - and CF(0) - the membrane proton channel. CF(1) has five subunits: alpha(3), beta(3), gamma(1), delta(1), epsilon(1). CF(0) has three main subunits: a(1), b(2) and c(9-12). The alpha and beta chains form an alternating ring which encloses part of the gamma chain. CF(1) is attached to CF(0) by a central stalk formed by the gamma and epsilon chains, while a peripheral stalk is formed by the delta and b chains.

It is found in the cell inner membrane. The enzyme catalyses ATP + H2O + 4 H(+)(in) = ADP + phosphate + 5 H(+)(out). Produces ATP from ADP in the presence of a proton gradient across the membrane. The alpha chain is a regulatory subunit. In Aeromonas salmonicida (strain A449), this protein is ATP synthase subunit alpha.